The following is an 860-amino-acid chain: M-phase phosphoprotein 8 (860 aa).

Met-1 is subject to N-acetylmethionine. Ser-51, Ser-85, Ser-136, and Ser-138 each carry phosphoserine. Positions 59 to 118 constitute a Chromo domain; it reads FEVEKILDMKTEGGKVLYKVRWKGYTSDDDTWEPEIHLEDCKEVLLEFRKKIAENKAKAV. Positions 80-87 are histone H3K9me3 binding; that stretch reads WKGYTSDD. Polar residues predominate over residues 129-141; sequence NDIFEANSDSDQQ. The segment at 129 to 191 is disordered; the sequence is NDIFEANSDS…SKPDLESSLE (63 aa). The residue at position 144 (Thr-144) is a Phosphothreonine. A phosphoserine; by CDK1 mark is found at Ser-149 and Ser-164. Composition is skewed to basic and acidic residues over residues 159–169 and 177–186; these read QREEKSPDDLK and KLKDKSKPDL. Ser-188, Ser-189, and Ser-192 each carry phosphoserine. Over residues 206–249 the composition is skewed to basic and acidic residues; it reads AKEELKESKKPKKDEVKETKELKKVKKGEIRDLKTKTREDPKEN. The tract at residues 206 to 440 is disordered; the sequence is AKEELKESKK…GRKEPKGLKT (235 aa). The segment covering 259-268 has biased composition (low complexity); sequence ESQVESESSV. Ser-266, Ser-272, and Ser-279 each carry phosphoserine. Basic and acidic residues predominate over residues 280–314; the sequence is EGLHSDSREEKQNTKSARERAGQDMGLEHGFEKPL. Position 319 is a phosphoserine (Ser-319). Thr-334 carries the post-translational modification Phosphothreonine; by CDK1. Positions 336 to 377 are enriched in basic and acidic residues; that stretch reads RKAEDTRENRKLENKNAFLEKKTVPKKQRNQDRSKSAAELEK. Phosphothreonine; by CDK1 is present on Thr-385. Phosphoserine occurs at positions 392, 400, and 403. Over residues 408–440 the composition is skewed to basic and acidic residues; sequence KETKRNESKEKYQKRHDSDKEEKGRKEPKGLKT. An interaction with humanin region spans residues 431–560; the sequence is GRKEPKGLKT…HLDGKDENFA (130 aa). At Thr-454 the chain carries Phosphothreonine. Residues 458 to 496 are disordered; sequence KNDVSENNRKREEIPLDFKTIDDHKTKENKQSLKERRNT. ANK repeat units follow at residues 600–629, 633–662, 666–695, and 699–728; these read SGMT…KVNG, NGTT…FVNV, NGET…DCNI, and HQNS…TLSR.

In terms of assembly, homodimer. Interacts (via chromo domain) with histone H3K9me3. Has the highest affinity for H3K9me3, and lesser affinity for H3K9me2 and H3K9me1. Component of the HUSH complex; at least composed of TASOR, PPHLN1 and MPHOSPH8. Interacts with DNMT3, EHMT1 and SETDB1. Interacts with MORC2; the interaction associateS MORC2 with the HUSH complex which recruits MORC2 to heterochromatic loci. Interacts with ZNF638; leading to recruitment of the HUSH complex to unintegrated retroviral DNA. Interacts with TASOR. Interacts with humanin. In terms of processing, phosphorylated in M (mitotic) phase. Phosphorylation by CDK1 promotes dissociation from chromatin.

Its subcellular location is the nucleus. It localises to the chromosome. In terms of biological role, heterochromatin component that specifically recognizes and binds methylated 'Lys-9' of histone H3 (H3K9me) and promotes recruitment of proteins that mediate epigenetic repression. Mediates recruitment of the HUSH complex to H3K9me3 sites: the HUSH complex is recruited to genomic loci rich in H3K9me3 and is required to maintain transcriptional silencing by promoting recruitment of SETDB1, a histone methyltransferase that mediates further deposition of H3K9me3, as well as MORC2. Binds H3K9me and promotes DNA methylation by recruiting DNMT3A to target CpG sites; these can be situated within the coding region of the gene. Mediates down-regulation of CDH1 expression. Also represses L1 retrotransposons in collaboration with MORC2 and, probably, SETDB1, the silencing is dependent of repressive epigenetic modifications, such as H3K9me3 mark. Silencing events often occur within introns of transcriptionally active genes, and lead to the down-regulation of host gene expression. The HUSH complex is also involved in the silencing of unintegrated retroviral DNA by being recruited by ZNF638: some part of the retroviral DNA formed immediately after infection remains unintegrated in the host genome and is transcriptionally repressed. The polypeptide is M-phase phosphoprotein 8 (Homo sapiens (Human)).